Here is a 646-residue protein sequence, read N- to C-terminus: Autophagy-related protein 28 (646 aa).

Disordered stretches follow at residues 1 to 148 (MSSP…HVDN) and 221 to 245 (PTRSTPDGNVIPVRQPVSNKPRGLK). Positions 12–21 (SPRQRLSNPL) are enriched in polar residues. Residues 63 to 75 (SATSTRRSSSPAS) are compositionally biased toward low complexity. Over residues 106–122 (MMMNQHPSRQSTVSSHG) the composition is skewed to polar residues. 2 coiled-coil regions span residues 283-350 (LDKM…MEDV) and 485-514 (QQAAMQSQLSEMDDVVQELQKRLQLAESKH). Disordered regions lie at residues 475–494 (SQAGDADEEPQQAAMQSQLS) and 546–612 (AAAV…RGSA). Composition is skewed to basic and acidic residues over residues 557–575 (STDKAEGTSQEERADSHDE) and 588–597 (RMEDHDHDPP).

Belongs to the ATG28 family.

The protein resides in the cytoplasm. It localises to the vacuole membrane. It is found in the cytoplasmic vesicle membrane. Required for the autophagic degradation of peroxisomes called pexophagy, but not essential for general autophagy. Involved in resistance to elevated pH. The polypeptide is Autophagy-related protein 28 (Gibberella zeae (strain ATCC MYA-4620 / CBS 123657 / FGSC 9075 / NRRL 31084 / PH-1) (Wheat head blight fungus)).